Reading from the N-terminus, the 578-residue chain is A-type ATP synthase subunit A (578 aa).

228–235 lines the ATP pocket; it reads GPFGSGKT.

The protein belongs to the ATPase alpha/beta chains family. As to quaternary structure, has multiple subunits with at least A(3), B(3), C, D, E, F, H, I and proteolipid K(x).

Its subcellular location is the cell membrane. It carries out the reaction ATP + H2O + 4 H(+)(in) = ADP + phosphate + 5 H(+)(out). Its function is as follows. Produces ATP from ADP in the presence of a proton gradient across the membrane. The archaeal alpha chain is a catalytic subunit. Functionally, component of the A-type ATP synthase that produces ATP from ADP in the presence of a proton gradient across the membrane. The A chain is the catalytic subunit. The protein is A-type ATP synthase subunit A of Methanosarcina barkeri.